The chain runs to 303 residues: N-acetyl-D-glucosamine kinase (303 aa).

ATP contacts are provided by residues Gly4–Lys11 and Gly133–Phe140. His157, Cys177, Cys179, and Cys184 together coordinate Zn(2+).

It belongs to the ROK (NagC/XylR) family. NagK subfamily.

It catalyses the reaction N-acetyl-D-glucosamine + ATP = N-acetyl-D-glucosamine 6-phosphate + ADP + H(+). Its pathway is cell wall biogenesis; peptidoglycan recycling. Catalyzes the phosphorylation of N-acetyl-D-glucosamine (GlcNAc) derived from cell-wall degradation, yielding GlcNAc-6-P. The sequence is that of N-acetyl-D-glucosamine kinase from Escherichia coli O81 (strain ED1a).